Consider the following 460-residue polypeptide: N-myc proto-oncogene protein (460 aa).

The interaction with AURKA stretch occupies residues 19–47; that stretch reads LEFDSLQPCFYPDEDDFYFGGPDSTPPGE. Residues 61-90 form an interaction with AURKA and FBXW7 region; it reads LSPSRAFSEQSPEPSDWATEMLLPEADLWG. The 9aaTAD motif lies at 76-85; it reads DWATEMLLPE. Disordered regions lie at residues 131-169, 221-288, and 330-388; these read VSEKLQHGRGPPAAGPATPGAGAANPAGRGHGGTAGAGR, AAAP…SNSK, and APSP…LERQ. Residues 138–158 show a composition bias toward low complexity; that stretch reads GRGPPAAGPATPGAGAANPAG. The span at 159–169 shows a compositional bias: gly residues; it reads RGHGGTAGAGR. Residues 221–233 show a composition bias toward low complexity; that stretch reads AAAPASAAVAAPP. The span at 255–274 shows a compositional bias: acidic residues; sequence TLSDSDDEDDEEEDEEEEID. 2 positions are modified to phosphoserine; by CK2: serine 257 and serine 259. The bHLH domain maps to 377-429; that stretch reads ERRRNHNILERQRRNDLRSSFLTLRDHVPELVKNEKAAKVVILKKATEYVHSL. The leucine-zipper stretch occupies residues 429–450; sequence LQAEEHQLLLEKEKLQARQQQL.

Efficient DNA binding requires dimerization with another bHLH protein. Binds DNA as a heterodimer with MAX. Interacts with KDM5A, KDM5B and HUWE1. Interacts with MYCNOS. Interacts with AURKA; interaction is phospho-independent and triggers AURKA activation; AURKA competes with FBXW7 for binding to unphosphorylated MYCN but not for binding to unphosphorylated MYCN. Interacts with FBXW7; FBXW7 competes with AURKA for binding to unphosphorylated MYCN but not for binding to phosphorylated MYCN. Post-translationally, phosphorylated by GSK3-beta which may promote its degradation. Phosphorylated by AURKA.

Its subcellular location is the nucleus. Positively regulates the transcription of MYCNOS in neuroblastoma cells. The protein is N-myc proto-oncogene protein (MYCN) of Marmota monax (Woodchuck).